The chain runs to 286 residues: Bifunctional protein FolD (286 aa).

NADP(+)-binding positions include 165 to 167 (GRS), Ser190, and Val231.

This sequence belongs to the tetrahydrofolate dehydrogenase/cyclohydrolase family. In terms of assembly, homodimer.

It carries out the reaction (6R)-5,10-methylene-5,6,7,8-tetrahydrofolate + NADP(+) = (6R)-5,10-methenyltetrahydrofolate + NADPH. It catalyses the reaction (6R)-5,10-methenyltetrahydrofolate + H2O = (6R)-10-formyltetrahydrofolate + H(+). It participates in one-carbon metabolism; tetrahydrofolate interconversion. Its function is as follows. Catalyzes the oxidation of 5,10-methylenetetrahydrofolate to 5,10-methenyltetrahydrofolate and then the hydrolysis of 5,10-methenyltetrahydrofolate to 10-formyltetrahydrofolate. The sequence is that of Bifunctional protein FolD from Bacillus cereus (strain G9842).